Reading from the N-terminus, the 153-residue chain is Alpha-amylase inhibitor 0.28 (153 aa).

A signal peptide spans 1 to 30; the sequence is MWMKTVFWGLLVFMLVATTMAVEYGARSHN. Intrachain disulfides connect Cys37–Cys84, Cys51–Cys72, Cys59–Cys112, Cys73–Cys128, and Cys86–Cys143.

It belongs to the protease inhibitor I6 (cereal trypsin/alpha-amylase inhibitor) family. In terms of assembly, monomer. Post-translationally, the disulfide bonds are essential for the inhibitor activity. In terms of tissue distribution, endosperm.

Its subcellular location is the secreted. Alpha-amylase inhibitor. In Triticum aestivum (Wheat), this protein is Alpha-amylase inhibitor 0.28 (IMA1).